The following is a 323-amino-acid chain: Small ribosomal subunit protein uS9m (323 aa).

The disordered stretch occupies residues 298–323; the sequence is TRDARKVERKKPGKVKARKSPTWVKR. Residues 304-323 show a composition bias toward basic residues; the sequence is VERKKPGKVKARKSPTWVKR.

It belongs to the universal ribosomal protein uS9 family.

Its subcellular location is the mitochondrion. The protein is Small ribosomal subunit protein uS9m (MRPS9) of Debaryomyces hansenii (strain ATCC 36239 / CBS 767 / BCRC 21394 / JCM 1990 / NBRC 0083 / IGC 2968) (Yeast).